We begin with the raw amino-acid sequence, 160 residues long: Endoribonuclease YbeY (160 aa).

Zn(2+) contacts are provided by H125, H129, and H135.

Belongs to the endoribonuclease YbeY family. Zn(2+) is required as a cofactor.

It is found in the cytoplasm. Single strand-specific metallo-endoribonuclease involved in late-stage 70S ribosome quality control and in maturation of the 3' terminus of the 16S rRNA. This is Endoribonuclease YbeY from Leuconostoc citreum (strain KM20).